A 372-amino-acid chain; its full sequence is Anhydro-N-acetylmuramic acid kinase (372 aa).

14–21 (GTSLDGVD) lines the ATP pocket.

This sequence belongs to the anhydro-N-acetylmuramic acid kinase family.

It catalyses the reaction 1,6-anhydro-N-acetyl-beta-muramate + ATP + H2O = N-acetyl-D-muramate 6-phosphate + ADP + H(+). It functions in the pathway amino-sugar metabolism; 1,6-anhydro-N-acetylmuramate degradation. It participates in cell wall biogenesis; peptidoglycan recycling. Functionally, catalyzes the specific phosphorylation of 1,6-anhydro-N-acetylmuramic acid (anhMurNAc) with the simultaneous cleavage of the 1,6-anhydro ring, generating MurNAc-6-P. Is required for the utilization of anhMurNAc either imported from the medium or derived from its own cell wall murein, and thus plays a role in cell wall recycling. The chain is Anhydro-N-acetylmuramic acid kinase from Photorhabdus laumondii subsp. laumondii (strain DSM 15139 / CIP 105565 / TT01) (Photorhabdus luminescens subsp. laumondii).